We begin with the raw amino-acid sequence, 185 residues long: ATP synthase subunit b 2 (185 aa).

Residues 1–26 (MAQGHGDAKGTTAHTEAGGGHKAPFP) form a disordered region. The chain crosses the membrane as a helical span at residues 37–57 (LVSLAIAFVALYLIVSKIALP).

This sequence belongs to the ATPase B chain family. In terms of assembly, F-type ATPases have 2 components, F(1) - the catalytic core - and F(0) - the membrane proton channel. F(1) has five subunits: alpha(3), beta(3), gamma(1), delta(1), epsilon(1). F(0) has three main subunits: a(1), b(2) and c(10-14). The alpha and beta chains form an alternating ring which encloses part of the gamma chain. F(1) is attached to F(0) by a central stalk formed by the gamma and epsilon chains, while a peripheral stalk is formed by the delta and b chains.

The protein localises to the cell inner membrane. Functionally, f(1)F(0) ATP synthase produces ATP from ADP in the presence of a proton or sodium gradient. F-type ATPases consist of two structural domains, F(1) containing the extramembraneous catalytic core and F(0) containing the membrane proton channel, linked together by a central stalk and a peripheral stalk. During catalysis, ATP synthesis in the catalytic domain of F(1) is coupled via a rotary mechanism of the central stalk subunits to proton translocation. Its function is as follows. Component of the F(0) channel, it forms part of the peripheral stalk, linking F(1) to F(0). The b'-subunit is a diverged and duplicated form of b found in plants and photosynthetic bacteria. This Rhodopseudomonas palustris (strain ATCC BAA-98 / CGA009) protein is ATP synthase subunit b 2 (atpF2).